The following is a 340-amino-acid chain: Ketol-acid reductoisomerase (NADP(+)) (340 aa).

In terms of domain architecture, KARI N-terminal Rossmann spans 1–182 (MRVYYDRDCD…GGGRSGIIET (182 aa)). NADP(+)-binding positions include 24 to 27 (YGSQ), Arg-48, Ser-51, Ser-53, and 83 to 86 (DELQ). The active site involves His-108. Gly-134 contacts NADP(+). In terms of domain architecture, KARI C-terminal knotted spans 183-329 (NFREECETDL…AKLREMMPWI (147 aa)). Mg(2+)-binding residues include Asp-191, Glu-195, Glu-227, and Glu-231. Ser-252 provides a ligand contact to substrate.

It belongs to the ketol-acid reductoisomerase family. It depends on Mg(2+) as a cofactor.

It carries out the reaction (2R)-2,3-dihydroxy-3-methylbutanoate + NADP(+) = (2S)-2-acetolactate + NADPH + H(+). The catalysed reaction is (2R,3R)-2,3-dihydroxy-3-methylpentanoate + NADP(+) = (S)-2-ethyl-2-hydroxy-3-oxobutanoate + NADPH + H(+). It functions in the pathway amino-acid biosynthesis; L-isoleucine biosynthesis; L-isoleucine from 2-oxobutanoate: step 2/4. The protein operates within amino-acid biosynthesis; L-valine biosynthesis; L-valine from pyruvate: step 2/4. Functionally, involved in the biosynthesis of branched-chain amino acids (BCAA). Catalyzes an alkyl-migration followed by a ketol-acid reduction of (S)-2-acetolactate (S2AL) to yield (R)-2,3-dihydroxy-isovalerate. In the isomerase reaction, S2AL is rearranged via a Mg-dependent methyl migration to produce 3-hydroxy-3-methyl-2-ketobutyrate (HMKB). In the reductase reaction, this 2-ketoacid undergoes a metal-dependent reduction by NADPH to yield (R)-2,3-dihydroxy-isovalerate. The protein is Ketol-acid reductoisomerase (NADP(+)) of Ruegeria sp. (strain TM1040) (Silicibacter sp.).